The chain runs to 531 residues: MLSKTSLLSLLSLAAGVVNADFGITTNDDSYVINANSPNSLVFTVDRGSCDITSIVHYGTELQYSGKGSHIGSGLGTATVSATKSGDYIKVTCETDTLTQYMVVHDGDPIIHMATYITEEPSIGELRFIARLNSDVLPNEEPFGDVSNTADGEAIEGSDVFLVDGETRSKFYSSQRFIDDQRHCIAGDEHRVCMILNQYETSSGGPFHRDINSNNGGDYNSLYWYMNSGHVQLESYRMGLHGPYSMYFSRSGTPSTDIDTSFFADLDIEGYVAESGRGTVSGTASGADSSFDWVVHWYNDDAQYWTYTSSSGSFTSPAMKPGTYTMVYYQGEYVVATSEVTVSAGSSTSKDISGSVETGTTIFKIGDWDGQPTGFRNAENQLRMHPSDSRMSDWGPLTYTVGSSSLTDFPMAIFKSVNSPVTIKFTATSDQTGAATLRIGTTLSFAGGRPQATINDYEGSAPSAPTNLDSRGVTRGAYRGYGDVYDVSVPEGTIVEGENTITISVISGSSGDDFLSPNFLDAVFIIALVDN.

Residues 1–20 (MLSKTSLLSLLSLAAGVVNA) form the signal peptide. 2 disulfides stabilise this stretch: C50/C93 and C184/C193.

Belongs to the polysaccharide lyase 4 family.

The protein localises to the secreted. The enzyme catalyses Endotype eliminative cleavage of L-alpha-rhamnopyranosyl-(1-&gt;4)-alpha-D-galactopyranosyluronic acid bonds of rhamnogalacturonan I domains in ramified hairy regions of pectin leaving L-rhamnopyranose at the reducing end and 4-deoxy-4,5-unsaturated D-galactopyranosyluronic acid at the non-reducing end.. Pectinolytic enzymes consist of four classes of enzymes: pectin lyase, polygalacturonase, pectin methylesterase and rhamnogalacturonase. Degrades the rhamnogalacturonan I (RG-I) backbone of pectin. The chain is Probable rhamnogalacturonate lyase A (rglA) from Aspergillus niger (strain ATCC MYA-4892 / CBS 513.88 / FGSC A1513).